Consider the following 892-residue polypeptide: Putative leucine-rich repeat receptor-like serine/threonine-protein kinase At2g04300 (892 aa).

The signal sequence occupies residues 1 to 26 (MKTHPQAILLCVLFFITFGLLHVVEA). Topologically, residues 27-523 (GNQEGFISLD…GAKKKNVVVL (497 aa)) are extracellular. Residues N99, N186, N241, N267, and N294 are each glycosylated (N-linked (GlcNAc...) asparagine). 4 LRR repeats span residues 375 to 396 (IKNI…PCVP), 399 to 422 (FMWD…FLNL), 423 to 444 (SSSH…LQNL), and 447 to 467 (SNNN…SLLV). Residues N407, N421, N437, N450, and N469 are each glycosylated (N-linked (GlcNAc...) asparagine). Residues 524-544 (VVVSIALVVVLGSALALFLVF) form a helical membrane-spanning segment. Topologically, residues 545-892 (RKRKTPRNEV…FGTEYTPEAR (348 aa)) are cytoplasmic. T573 is modified (phosphothreonine). Positions 582–855 (NNFEKILGKG…QVVIELNECL (274 aa)) constitute a Protein kinase domain. ATP is bound by residues 588 to 596 (LGKGGFGMV) and K610. Phosphotyrosine is present on Y655. D707 (proton acceptor) is an active-site residue. T742 and T747 each carry phosphothreonine. Y755 is modified (phosphotyrosine).

Belongs to the protein kinase superfamily. Ser/Thr protein kinase family.

The protein localises to the cell membrane. It catalyses the reaction L-seryl-[protein] + ATP = O-phospho-L-seryl-[protein] + ADP + H(+). The enzyme catalyses L-threonyl-[protein] + ATP = O-phospho-L-threonyl-[protein] + ADP + H(+). The sequence is that of Putative leucine-rich repeat receptor-like serine/threonine-protein kinase At2g04300 from Arabidopsis thaliana (Mouse-ear cress).